The following is a 354-amino-acid chain: MHELLRKWLDDTNVLLLDNGLVVKVRSRVPHIRTYEVIGKLSVFDNSLGDDTLFEGKVENVFVFMFRRFLCVNKDGHCYSRKHDELYYYGRVDLDSVSKVTSGYEKLFIHRELYILTDLIERVSKFFNLAQDVVEASFEYAKVEERLGHVRNVLQLAGGKSTNADLTIKISDDVEQLLGKRGGFLKVVNGILSKNGSDVVTNDNELIHAINQNLVPDKVMSVSNVMKETGFLQFPKFLSKLEGQVPKGTKFLDKHVPDFTWIQALEERVNIRRGESGLQTLLADIVPRNAIAAQKLTMLGYIEYHDYVVIVCQSGVFSDDWATCRMLWAALSSAQLYTYVDASRIGPIVYGWLL.

As to quaternary structure, interacts with capsid protein; this interaction may play a role in vector transmission of the virus.

Involved in transmission of the virus by the vector nematode Paratrichodorus pachydermus. This Bidens pilosa (Hairy beggarticks) protein is 40 kDa protein.